We begin with the raw amino-acid sequence, 408 residues long: NADH-quinone oxidoreductase subunit D (408 aa).

It belongs to the complex I 49 kDa subunit family. In terms of assembly, NDH-1 is composed of 14 different subunits. Subunits NuoB, C, D, E, F, and G constitute the peripheral sector of the complex.

It localises to the cell inner membrane. It carries out the reaction a quinone + NADH + 5 H(+)(in) = a quinol + NAD(+) + 4 H(+)(out). Its function is as follows. NDH-1 shuttles electrons from NADH, via FMN and iron-sulfur (Fe-S) centers, to quinones in the respiratory chain. The immediate electron acceptor for the enzyme in this species is believed to be ubiquinone. Couples the redox reaction to proton translocation (for every two electrons transferred, four hydrogen ions are translocated across the cytoplasmic membrane), and thus conserves the redox energy in a proton gradient. The sequence is that of NADH-quinone oxidoreductase subunit D from Campylobacter jejuni subsp. jejuni serotype O:2 (strain ATCC 700819 / NCTC 11168).